Here is a 283-residue protein sequence, read N- to C-terminus: Bis(5'-nucleosyl)-tetraphosphatase, symmetrical (283 aa).

The protein belongs to the Ap4A hydrolase family.

The enzyme catalyses P(1),P(4)-bis(5'-adenosyl) tetraphosphate + H2O = 2 ADP + 2 H(+). In terms of biological role, hydrolyzes diadenosine 5',5'''-P1,P4-tetraphosphate to yield ADP. The polypeptide is Bis(5'-nucleosyl)-tetraphosphatase, symmetrical (Pseudomonas aeruginosa (strain LESB58)).